The following is a 174-amino-acid chain: NAD(P)H-quinone oxidoreductase subunit J (174 aa).

This sequence belongs to the complex I 30 kDa subunit family. As to quaternary structure, NDH-1 can be composed of about 15 different subunits; different subcomplexes with different compositions have been identified which probably have different functions.

The protein resides in the cellular thylakoid membrane. It carries out the reaction a plastoquinone + NADH + (n+1) H(+)(in) = a plastoquinol + NAD(+) + n H(+)(out). The catalysed reaction is a plastoquinone + NADPH + (n+1) H(+)(in) = a plastoquinol + NADP(+) + n H(+)(out). Its function is as follows. NDH-1 shuttles electrons from an unknown electron donor, via FMN and iron-sulfur (Fe-S) centers, to quinones in the respiratory and/or the photosynthetic chain. The immediate electron acceptor for the enzyme in this species is believed to be plastoquinone. Couples the redox reaction to proton translocation, and thus conserves the redox energy in a proton gradient. Cyanobacterial NDH-1 also plays a role in inorganic carbon-concentration. This Picosynechococcus sp. (strain ATCC 27264 / PCC 7002 / PR-6) (Agmenellum quadruplicatum) protein is NAD(P)H-quinone oxidoreductase subunit J.